A 273-amino-acid polypeptide reads, in one-letter code: Pyrroline-5-carboxylate reductase (273 aa).

This sequence belongs to the pyrroline-5-carboxylate reductase family.

The protein resides in the cytoplasm. It catalyses the reaction L-proline + NADP(+) = (S)-1-pyrroline-5-carboxylate + NADPH + 2 H(+). It carries out the reaction L-proline + NAD(+) = (S)-1-pyrroline-5-carboxylate + NADH + 2 H(+). It participates in amino-acid biosynthesis; L-proline biosynthesis; L-proline from L-glutamate 5-semialdehyde: step 1/1. This is Pyrroline-5-carboxylate reductase (PROC) from Pisum sativum (Garden pea).